A 294-amino-acid polypeptide reads, in one-letter code: Phosphatidylglycerol--prolipoprotein diacylglyceryl transferase (294 aa).

The next 7 membrane-spanning stretches (helical) occupy residues 21 to 41 (VSLHWYGMMYLIGFVFALWLA), 60 to 80 (LLYVGFVGVFIGGRLGYVLFY), 96 to 116 (WDGGMSFHGGLIGVICAMIWF), 124 to 144 (FFQVADFVAPLIPFGLGLGRI), 199 to 219 (SQLYEMFLEGVVLFIILNIFV), 226 to 246 (GSVSGLFLIGYGAFRIIVEFF), and 259 to 279 (ISMGQILSIPMIILGIIFMVW). R143 is a binding site for a 1,2-diacyl-sn-glycero-3-phospho-(1'-sn-glycerol).

This sequence belongs to the Lgt family.

It localises to the cell inner membrane. It catalyses the reaction L-cysteinyl-[prolipoprotein] + a 1,2-diacyl-sn-glycero-3-phospho-(1'-sn-glycerol) = an S-1,2-diacyl-sn-glyceryl-L-cysteinyl-[prolipoprotein] + sn-glycerol 1-phosphate + H(+). Its pathway is protein modification; lipoprotein biosynthesis (diacylglyceryl transfer). Functionally, catalyzes the transfer of the diacylglyceryl group from phosphatidylglycerol to the sulfhydryl group of the N-terminal cysteine of a prolipoprotein, the first step in the formation of mature lipoproteins. The protein is Phosphatidylglycerol--prolipoprotein diacylglyceryl transferase of Proteus mirabilis (strain HI4320).